Here is a 270-residue protein sequence, read N- to C-terminus: tRNA pseudouridine synthase B (270 aa).

The active-site Nucleophile is the aspartate 49.

The protein belongs to the pseudouridine synthase TruB family. Type 1 subfamily.

It catalyses the reaction uridine(55) in tRNA = pseudouridine(55) in tRNA. Its function is as follows. Responsible for synthesis of pseudouridine from uracil-55 in the psi GC loop of transfer RNAs. The protein is tRNA pseudouridine synthase B of Bartonella quintana (strain Toulouse) (Rochalimaea quintana).